A 436-amino-acid chain; its full sequence is Putative UDP-arabinose 4-epimerase 4 (436 aa).

Residues M1–G20 are disordered. At M1–K60 the chain is on the cytoplasmic side. Residues L61–F81 traverse the membrane as a helical; Signal-anchor for type II membrane protein segment. Topologically, residues T82–Y436 are lumenal. NAD(+) is bound at residue H96–L127. The Proton acceptor role is filled by Y244.

The protein belongs to the NAD(P)-dependent epimerase/dehydratase family. NAD(+) serves as cofactor.

The protein localises to the golgi apparatus. It is found in the golgi stack membrane. It carries out the reaction UDP-beta-L-arabinopyranose = UDP-alpha-D-xylose. The protein operates within nucleotide-sugar biosynthesis; UDP-L-arabinose biosynthesis; UDP-L-arabinose from UDP-alpha-D-xylose: step 1/1. It participates in cell wall biogenesis; cell wall polysaccharide biosynthesis. This is Putative UDP-arabinose 4-epimerase 4 from Arabidopsis thaliana (Mouse-ear cress).